Here is a 264-residue protein sequence, read N- to C-terminus: Transformer-2 sex-determining protein (264 aa).

The segment at 1 to 96 (MDREPLSSGR…HKSREHPQAS (96 aa)) is disordered. Over residues 13–22 (CSARYKHKRS) the composition is skewed to basic residues. The segment covering 23–33 (ASSSSAGTTSS) has biased composition (low complexity). Ser40 bears the Phosphoserine mark. Basic residues predominate over residues 47-61 (SRRHQRSSSRRRSRS). Residues 71–85 (EPRHRSGRSSRDRER) are compositionally biased toward basic and acidic residues. One can recognise an RRM domain in the interval 97 to 175 (RCIGVFGLNT…RRIRVDFSIT (79 aa)). The tract at residues 176–196 (QRAHTPTPGVYLGRQPRGKAP) is linker. The segment at 179–264 (HTPTPGVYLG…PQLRRTSSRY (86 aa)) is disordered. Thr180 is subject to Phosphothreonine. A compositionally biased stretch (basic residues) spans 191–206 (PRGKAPRSFSPRRGRR). Basic and acidic residues predominate over residues 207 to 234 (VYHDRSASPYDNYRDRYDYRNDRYDRNL). Ser212 and Ser214 each carry phosphoserine. Basic residues predominate over residues 235–250 (RRSPSRNRYTRNRSYS). The residue at position 254 (Ser254) is a Phosphoserine.

It belongs to the splicing factor SR family. In terms of processing, extensively phosphorylated on serine residues in the RS domain. As to expression, isoform Tmaj and isoform Tmin are expressed in males and females. Isoform msTmaj and isoform msTmin are present only in male germ cells.

Its function is as follows. Required for female sex determination in somatic cells and for spermatogenesis in male germ cells. Positive regulator of female-specific splicing and/or polyadenylation of doublesex (dsx) pre-mRNA. Splicing requires an enhancer complex, dsxRE (dsx repeat element: which contains six copies of a 13-nucleotide repeat and a purine-rich enhancer (PRE)). DsxRE is formed through cooperative interactions between tra, tra2 and the sr proteins, and these interactions require both the repeat sequences and PRE. PRE is required for specific binding of tra2 to the dsxRE. Protein-RNA and protein-protein interactions are involved in tra-2 dependent activation and repression of alternative splicing. Together with tra-2, plays a role in switching fru splicing from the male-specific pattern to the female-specific pattern through activation of the female-specific fru 5'-splice site. This chain is Transformer-2 sex-determining protein (tra2), found in Drosophila melanogaster (Fruit fly).